The sequence spans 464 residues: Siroheme synthase (464 aa).

The precorrin-2 dehydrogenase /sirohydrochlorin ferrochelatase stretch occupies residues Met-1 to Leu-203. Residues Glu-22 to Ile-23 and Pro-43 to Gln-44 each bind NAD(+). The residue at position 128 (Ser-128) is a Phosphoserine. Residues Gly-216–Asp-464 form a uroporphyrinogen-III C-methyltransferase region. S-adenosyl-L-methionine is bound at residue Pro-225. Catalysis depends on Asp-248, which acts as the Proton acceptor. The Proton donor role is filled by Lys-270. S-adenosyl-L-methionine-binding positions include Gly-301 to Asp-303, Ile-306, Thr-331 to Ala-332, Met-383, and Gly-412.

This sequence in the N-terminal section; belongs to the precorrin-2 dehydrogenase / sirohydrochlorin ferrochelatase family. In the C-terminal section; belongs to the precorrin methyltransferase family.

It catalyses the reaction uroporphyrinogen III + 2 S-adenosyl-L-methionine = precorrin-2 + 2 S-adenosyl-L-homocysteine + H(+). The catalysed reaction is precorrin-2 + NAD(+) = sirohydrochlorin + NADH + 2 H(+). It carries out the reaction siroheme + 2 H(+) = sirohydrochlorin + Fe(2+). It functions in the pathway cofactor biosynthesis; adenosylcobalamin biosynthesis; precorrin-2 from uroporphyrinogen III: step 1/1. It participates in cofactor biosynthesis; adenosylcobalamin biosynthesis; sirohydrochlorin from precorrin-2: step 1/1. Its pathway is porphyrin-containing compound metabolism; siroheme biosynthesis; precorrin-2 from uroporphyrinogen III: step 1/1. The protein operates within porphyrin-containing compound metabolism; siroheme biosynthesis; siroheme from sirohydrochlorin: step 1/1. It functions in the pathway porphyrin-containing compound metabolism; siroheme biosynthesis; sirohydrochlorin from precorrin-2: step 1/1. In terms of biological role, multifunctional enzyme that catalyzes the SAM-dependent methylations of uroporphyrinogen III at position C-2 and C-7 to form precorrin-2 via precorrin-1. Then it catalyzes the NAD-dependent ring dehydrogenation of precorrin-2 to yield sirohydrochlorin. Finally, it catalyzes the ferrochelation of sirohydrochlorin to yield siroheme. The chain is Siroheme synthase from Azotobacter vinelandii (strain DJ / ATCC BAA-1303).